Consider the following 197-residue polypeptide: MKKLFLIIGAPGSGKTTDASIIAEKHPDRIVHYSTGDMLREEVASGSELGKTIESYIAKGALVPLNIIIDTIVSAIKHAPVDTILIDGYPRSEEQMTAFDELVSKEDDIDLVSVIEVRVSEEVARERILGRRAEAAPGEERSDDSEEVFNDRMKIYTDPLGAIQRFYTDKGLLTIINGERTLDEVVDEMEKFVLSKI.

An ATP-binding site is contributed by 12–17 (GSGKTT). An NMP region spans residues 34–63 (STGDMLREEVASGSELGKTIESYIAKGALV). Residues T35, R40, 61–63 (ALV), 88–91 (GYPR), and Q95 each bind AMP. The tract at residues 130 to 144 (GRRAEAAPGEERSDD) is LID. R131 provides a ligand contact to ATP. Residues R141 and R152 each contribute to the AMP site. ATP is bound at residue R180.

This sequence belongs to the adenylate kinase family. As to quaternary structure, monomer.

It localises to the cytoplasm. It carries out the reaction AMP + ATP = 2 ADP. It functions in the pathway purine metabolism; AMP biosynthesis via salvage pathway; AMP from ADP: step 1/1. Functionally, catalyzes the reversible transfer of the terminal phosphate group between ATP and AMP. Plays an important role in cellular energy homeostasis and in adenine nucleotide metabolism. This chain is Adenylate kinase, found in Sulfurovum sp. (strain NBC37-1).